The primary structure comprises 540 residues: DNA-(apurinic or apyrimidinic site) endonuclease (540 aa).

The Mg(2+) site is built by N206 and E239. The tract at residues 256 to 276 (NNKVYGGKKNEGEERNRGSVK) is disordered. Residues 263-276 (KKNEGEERNRGSVK) are compositionally biased toward basic and acidic residues. Positions 400, 402, 530, and 531 each coordinate Mg(2+). The active-site Proton acceptor is H531.

It belongs to the DNA repair enzymes AP/ExoA family. It depends on Mg(2+) as a cofactor. Requires Mn(2+) as cofactor. May be proteolytically cleaved.

It localises to the mitochondrion. The enzyme catalyses Exonucleolytic cleavage in the 3'- to 5'-direction to yield nucleoside 5'-phosphates.. Its function is as follows. Multifunctional protein that plays a central role in mitochondrial DNA base excision repair pathway induced by oxidative stress. Has apurinic/apyrimidinic (AP) endonuclease activity towards double-stranded DNA (dsDNA). Has nucleotide incision repair (NIR) activity; acts on dsDNA with oxidized bases thymine glycol and 5,6-dihydro-2'-deoxyuridine. Has 3'-5' exonuclease; can use dsDNA templates with 3'-OH termini including blunt-end, gapped and mismatched 3'-recessed. Has 3'-phosphatase activity; cleaves 3'-phosphate from blunt, recessed and gapped dsDNA templates, followed by 3'-5' exonuclease activity. Has RNase H-like activity; cleaves RNA on 3'-recessed RNA-DNA duplex. Plays a role in merosome infection of host erythrocytes. The chain is DNA-(apurinic or apyrimidinic site) endonuclease from Plasmodium berghei (strain Anka).